The chain runs to 244 residues: 1-(5-phosphoribosyl)-5-[(5-phosphoribosylamino)methylideneamino] imidazole-4-carboxamide isomerase (244 aa).

The active-site Proton acceptor is the aspartate 8. The Proton donor role is filled by aspartate 129.

Belongs to the HisA/HisF family.

The protein localises to the cytoplasm. It carries out the reaction 1-(5-phospho-beta-D-ribosyl)-5-[(5-phospho-beta-D-ribosylamino)methylideneamino]imidazole-4-carboxamide = 5-[(5-phospho-1-deoxy-D-ribulos-1-ylimino)methylamino]-1-(5-phospho-beta-D-ribosyl)imidazole-4-carboxamide. It participates in amino-acid biosynthesis; L-histidine biosynthesis; L-histidine from 5-phospho-alpha-D-ribose 1-diphosphate: step 4/9. The chain is 1-(5-phosphoribosyl)-5-[(5-phosphoribosylamino)methylideneamino] imidazole-4-carboxamide isomerase from Allorhizobium ampelinum (strain ATCC BAA-846 / DSM 112012 / S4) (Agrobacterium vitis (strain S4)).